The following is a 287-amino-acid chain: Inorganic pyrophosphatase (287 aa).

Position 79 (arginine 79) interacts with diphosphate. Mg(2+) contacts are provided by aspartate 116, aspartate 121, and aspartate 153.

It belongs to the PPase family. Mg(2+) serves as cofactor.

It localises to the cytoplasm. The catalysed reaction is diphosphate + H2O = 2 phosphate + H(+). In Candida glabrata (strain ATCC 2001 / BCRC 20586 / JCM 3761 / NBRC 0622 / NRRL Y-65 / CBS 138) (Yeast), this protein is Inorganic pyrophosphatase (IPP1).